Reading from the N-terminus, the 107-residue chain is ATPase inhibitor, mitochondrial (107 aa).

The transit peptide at 1–25 (MAGSALAVRARLGVWGMRVLQTRGF) directs the protein to the mitochondrion. Residues 25–58 (FGSDSSESMDSGAGSIREAGGAFGKREKAEEDRY) are disordered. The N-terminal inhibitory region stretch occupies residues 26–52 (GSDSSESMDSGAGSIREAGGAFGKREK). Residue S39 is modified to Phosphoserine. Basic and acidic residues predominate over residues 48–58 (GKREKAEEDRY). A coiled-coil region spans residues 60 to 107 (REKTREQLAALKKHHEDEIDHHSKEIERLQKQIERHKKKIKYLKNSEH). An antiparallel alpha-helical coiled coil region region spans residues 74–106 (HEDEIDHHSKEIERLQKQIERHKKKIKYLKNSE). The residue at position 103 (K103) is an N6-succinyllysine.

Belongs to the ATPase inhibitor family. In terms of assembly, homodimer; represents the active form and is present at a pH value below 6.5. Homotetramer; represents the inactive form and is present at a pH value above 7.0.

It localises to the mitochondrion. In terms of biological role, endogenous F(1)F(o)-ATPase inhibitor limiting ATP depletion when the mitochondrial membrane potential falls below a threshold and the F(1)F(o)-ATP synthase starts hydrolyzing ATP to pump protons out of the mitochondrial matrix. Required to avoid the consumption of cellular ATP when the F(1)F(o)-ATP synthase enzyme acts as an ATP hydrolase. Indirectly acts as a regulator of heme synthesis in erythroid tissues: regulates heme synthesis by modulating the mitochondrial pH and redox potential, allowing FECH to efficiently catalyze the incorporation of iron into protoporphyrin IX to produce heme. This Rattus norvegicus (Rat) protein is ATPase inhibitor, mitochondrial.